The primary structure comprises 379 residues: Cytochrome b (379 aa).

The next 4 membrane-spanning stretches (helical) occupy residues 33–53 (FGSL…FLAM), 77–98 (WTIR…FIHV), 113–133 (WNVG…GYVL), and 178–198 (FFAL…IHLL). Histidine 83 and histidine 97 together coordinate heme b. Heme b is bound by residues histidine 182 and histidine 196. Histidine 201 serves as a coordination point for a ubiquinone. 4 helical membrane-spanning segments follow: residues 226 to 246 (TKDF…ALFY), 288 to 308 (LGGV…PFLQ), 320 to 340 (LSQF…WIGG), and 347 to 367 (FINI…FIMP).

The protein belongs to the cytochrome b family. In terms of assembly, the cytochrome bc1 complex contains 11 subunits: 3 respiratory subunits (MT-CYB, CYC1 and UQCRFS1), 2 core proteins (UQCRC1 and UQCRC2) and 6 low-molecular weight proteins (UQCRH/QCR6, UQCRB/QCR7, UQCRQ/QCR8, UQCR10/QCR9, UQCR11/QCR10 and a cleavage product of UQCRFS1). This cytochrome bc1 complex then forms a dimer. It depends on heme b as a cofactor.

The protein resides in the mitochondrion inner membrane. Functionally, component of the ubiquinol-cytochrome c reductase complex (complex III or cytochrome b-c1 complex) that is part of the mitochondrial respiratory chain. The b-c1 complex mediates electron transfer from ubiquinol to cytochrome c. Contributes to the generation of a proton gradient across the mitochondrial membrane that is then used for ATP synthesis. The chain is Cytochrome b (MT-CYB) from Lepilemur sahamalazensis (Sahamalaza sportive lemur).